A 779-amino-acid polypeptide reads, in one-letter code: 3-isopropylmalate dehydratase (779 aa).

[4Fe-4S] cluster is bound by residues cysteine 360, cysteine 421, and cysteine 424. Residues 484 to 518 are disordered; that stretch reads QDQSSPKVEVTSEDEKELESAAYDHAEPVQPEDAP. Serine 488 bears the Phosphoserine mark. Threonine 494 is subject to Phosphothreonine. Phosphoserine is present on serine 495. Over residues 501-510 the composition is skewed to basic and acidic residues; that stretch reads LESAAYDHAE.

Belongs to the aconitase/IPM isomerase family. As to quaternary structure, monomer. The cofactor is [4Fe-4S] cluster.

The catalysed reaction is (2R,3S)-3-isopropylmalate = (2S)-2-isopropylmalate. Its pathway is amino-acid biosynthesis; L-leucine biosynthesis; L-leucine from 3-methyl-2-oxobutanoate: step 2/4. Functionally, catalyzes the isomerization between 2-isopropylmalate and 3-isopropylmalate, via the formation of 2-isopropylmaleate. The sequence is that of 3-isopropylmalate dehydratase (LEU1) from Saccharomyces cerevisiae (strain ATCC 204508 / S288c) (Baker's yeast).